The primary structure comprises 452 residues: Phosphoglucosamine mutase (452 aa).

The active-site Phosphoserine intermediate is Ser103. Mg(2+) is bound by residues Ser103, Asp243, Asp245, and Asp247. Phosphoserine is present on Ser103.

This sequence belongs to the phosphohexose mutase family. The cofactor is Mg(2+). Post-translationally, activated by phosphorylation.

The catalysed reaction is alpha-D-glucosamine 1-phosphate = D-glucosamine 6-phosphate. In terms of biological role, catalyzes the conversion of glucosamine-6-phosphate to glucosamine-1-phosphate. The protein is Phosphoglucosamine mutase of Exiguobacterium sp. (strain ATCC BAA-1283 / AT1b).